A 621-amino-acid polypeptide reads, in one-letter code: Chaperone protein DnaK (621 aa).

Threonine 202 carries the phosphothreonine; by autocatalysis modification. The interval 596–621 (SQFAQAAKQNEEKKEEDKKDSEESKN) is disordered. Over residues 604-621 (QNEEKKEEDKKDSEESKN) the composition is skewed to basic and acidic residues.

The protein belongs to the heat shock protein 70 family.

Functionally, acts as a chaperone. This chain is Chaperone protein DnaK, found in Malacoplasma penetrans (strain HF-2) (Mycoplasma penetrans).